A 284-amino-acid polypeptide reads, in one-letter code: Tropomyosin alpha-3 chain (284 aa).

M1 is subject to N-acetylmethionine. The disordered stretch occupies residues 1–43 (MEAIKKKMQMLKLDKENALDRAEQAEAEQKQAEERSKQLEDEL). The stretch at 1-284 (MEAIKKKMQM…DHALNDMTSI (284 aa)) forms a coiled coil. E2 carries the N-acetylalanine modification. Basic and acidic residues predominate over residues 12-40 (KLDKENALDRAEQAEAEQKQAEERSKQLE). Position 53 is a phosphothreonine (T53). Phosphoserine occurs at positions 61 and 87. T108 is modified (phosphothreonine). A phosphoserine mark is found at S206 and S215. L228 carries the N6-acetyllysine modification. T252 carries the phosphothreonine modification. Phosphotyrosine is present on Y261. S271 is modified (phosphoserine). T282 carries the post-translational modification Phosphothreonine. At S283 the chain carries Phosphoserine.

Belongs to the tropomyosin family. As to quaternary structure, homodimer. Heterodimer of an alpha (TPM1, TPM3 or TPM4) and a beta (TPM2) chain. Interacts with TMOD1. Interacts with TNNT1.

It is found in the cytoplasm. Its subcellular location is the cytoskeleton. Binds to actin filaments in muscle and non-muscle cells. Plays a central role, in association with the troponin complex, in the calcium dependent regulation of vertebrate striated muscle contraction. Smooth muscle contraction is regulated by interaction with caldesmon. In non-muscle cells is implicated in stabilizing cytoskeleton actin filaments. The polypeptide is Tropomyosin alpha-3 chain (TPM3) (Bos taurus (Bovine)).